The primary structure comprises 445 residues: Xylose isomerase (445 aa).

Catalysis depends on residues His109 and Asp112. Mg(2+) contacts are provided by Glu240, Glu276, His279, Asp304, Asp315, Asp317, and Asp347.

Belongs to the xylose isomerase family. As to quaternary structure, homotetramer. Mg(2+) serves as cofactor.

The protein resides in the cytoplasm. It catalyses the reaction alpha-D-xylose = alpha-D-xylulofuranose. This chain is Xylose isomerase, found in Xanthomonas oryzae pv. oryzae (strain MAFF 311018).